A 317-amino-acid chain; its full sequence is MSLRDDLTINERDPLLSSFDQRQEYNTSNNTYKVNNNSNEPSVLTLYNSDELGTSQRSSYQKFVRRSQEFKMQHREFLAEFIGTLILVLLTCGFCAEQTLNIEKSKSWLTSSLGSGLSVLIGICVAGHVSGGHLNPAITIAFWVFSGFPIRKVPMYITAQLLGAFSGAALLYSIVEPAISQFDHGKRQILGELGTAGIFGTYPPLYVGTGSAVASEVVGTAMLLLVVMVTGHPNNLPFRTAQGAMIALGVTTISLCIGYTSGFSLNPARDFGPRLFTAVAGWGIDVFTVHHYYALVPMFAPILGGLAGGFIYTVFID.

The Cytoplasmic portion of the chain corresponds to 1-75 (MSLRDDLTIN…RSQEFKMQHR (75 aa)). Residues 76–96 (EFLAEFIGTLILVLLTCGFCA) form a helical membrane-spanning segment. The Extracellular portion of the chain corresponds to 97 to 108 (EQTLNIEKSKSW). A helical transmembrane segment spans residues 109-129 (LTSSLGSGLSVLIGICVAGHV). The Cytoplasmic portion of the chain corresponds to 130-154 (SGGHLNPAITIAFWVFSGFPIRKVP). The short motif at 135–137 (NPA) is the NPA 1 element. A helical transmembrane segment spans residues 155–175 (MYITAQLLGAFSGAALLYSIV). The Extracellular segment spans residues 176 to 208 (EPAISQFDHGKRQILGELGTAGIFGTYPPLYVG). A helical transmembrane segment spans residues 209-229 (TGSAVASEVVGTAMLLLVVMV). The Cytoplasmic segment spans residues 230 to 242 (TGHPNNLPFRTAQ). A helical membrane pass occupies residues 243–263 (GAMIALGVTTISLCIGYTSGF). At 264–295 (SLNPARDFGPRLFTAVAGWGIDVFTVHHYYAL) the chain is on the extracellular side. Positions 266-268 (NPA) match the NPA 2 motif. The helical transmembrane segment at 296-316 (VPMFAPILGGLAGGFIYTVFI) threads the bilayer. Aspartate 317 is a topological domain (cytoplasmic).

It belongs to the MIP/aquaporin (TC 1.A.8) family.

The protein localises to the cell membrane. It catalyses the reaction H2O(in) = H2O(out). It carries out the reaction glycerol(in) = glycerol(out). Water channel required to facilitate the transport of water across membranes. Contributes to water uptake of spores during the early stages of spore germination. Aquaporins AQP1 and AQP2 act as extracellular pH sensors and enable the spores to hydrate under favorable conditions and to commence germination. Wounded vegetables and fruit present acidic pH, so the optimal pH range for germination is adapted to the relevant host pH. The chain is Aquaporin-2 from Rhizopus delemar (strain RA 99-880 / ATCC MYA-4621 / FGSC 9543 / NRRL 43880) (Mucormycosis agent).